The following is a 232-amino-acid chain: UPF0758 protein BH3032 (232 aa).

An MPN domain is found at 107-229 (VIRTPEDVSR…FVSLKEKGHL (123 aa)). Zn(2+) contacts are provided by histidine 178, histidine 180, and aspartate 191. The short motif at 178 to 191 (HNHPSGDPTPSRED) is the JAMM motif element.

Belongs to the UPF0758 family.

In Halalkalibacterium halodurans (strain ATCC BAA-125 / DSM 18197 / FERM 7344 / JCM 9153 / C-125) (Bacillus halodurans), this protein is UPF0758 protein BH3032.